Reading from the N-terminus, the 245-residue chain is 3-dehydroquinate dehydratase (245 aa).

3-dehydroquinate is bound by residues 35–37 (EFR) and Arg70. His132 serves as the catalytic Proton donor/acceptor. The active-site Schiff-base intermediate with substrate is Lys158. The 3-dehydroquinate site is built by Arg199, Thr220, and Gln224.

This sequence belongs to the type-I 3-dehydroquinase family. In terms of assembly, homodimer.

It catalyses the reaction 3-dehydroquinate = 3-dehydroshikimate + H2O. It participates in metabolic intermediate biosynthesis; chorismate biosynthesis; chorismate from D-erythrose 4-phosphate and phosphoenolpyruvate: step 3/7. Functionally, involved in the third step of the chorismate pathway, which leads to the biosynthesis of aromatic amino acids. Catalyzes the cis-dehydration of 3-dehydroquinate (DHQ) and introduces the first double bond of the aromatic ring to yield 3-dehydroshikimate. This chain is 3-dehydroquinate dehydratase, found in Haloquadratum walsbyi (strain DSM 16790 / HBSQ001).